We begin with the raw amino-acid sequence, 479 residues long: UDP-N-acetylmuramoyl-L-alanyl-D-glutamate--2,6-diaminopimelate ligase (479 aa).

Ser-21 is a UDP-N-acetyl-alpha-D-muramoyl-L-alanyl-D-glutamate binding site. 98–104 (GTNGKSS) serves as a coordination point for ATP. UDP-N-acetyl-alpha-D-muramoyl-L-alanyl-D-glutamate contacts are provided by residues 144 to 145 (TT), Ser-171, Gln-177, and Arg-179. Residue Lys-211 is modified to N6-carboxylysine. Meso-2,6-diaminopimelate-binding positions include Arg-372, 396 to 399 (DNPR), Gly-446, and Glu-450. The Meso-diaminopimelate recognition motif motif lies at 396–399 (DNPR).

It belongs to the MurCDEF family. MurE subfamily. Mg(2+) is required as a cofactor. In terms of processing, carboxylation is probably crucial for Mg(2+) binding and, consequently, for the gamma-phosphate positioning of ATP.

It is found in the cytoplasm. It catalyses the reaction UDP-N-acetyl-alpha-D-muramoyl-L-alanyl-D-glutamate + meso-2,6-diaminopimelate + ATP = UDP-N-acetyl-alpha-D-muramoyl-L-alanyl-gamma-D-glutamyl-meso-2,6-diaminopimelate + ADP + phosphate + H(+). It functions in the pathway cell wall biogenesis; peptidoglycan biosynthesis. Functionally, catalyzes the addition of meso-diaminopimelic acid to the nucleotide precursor UDP-N-acetylmuramoyl-L-alanyl-D-glutamate (UMAG) in the biosynthesis of bacterial cell-wall peptidoglycan. This is UDP-N-acetylmuramoyl-L-alanyl-D-glutamate--2,6-diaminopimelate ligase from Rickettsia conorii (strain ATCC VR-613 / Malish 7).